The chain runs to 305 residues: Protein FdhE homolog (305 aa).

Belongs to the FdhE family.

The protein resides in the cytoplasm. Its function is as follows. Necessary for formate dehydrogenase activity. The polypeptide is Protein FdhE homolog (Actinobacillus pleuropneumoniae serotype 7 (strain AP76)).